The chain runs to 638 residues: Dihydrolipoyllysine-residue acetyltransferase component of pyruvate dehydrogenase complex (638 aa).

Lipoyl-binding domains follow at residues 2–74 (SEII…IELE) and 117–191 (SQEV…LTLR). At lysine 40 the chain carries N6-lipoyllysine. The segment covering 90 to 117 (PAAPTQAVDEAEAPSPGASATPAPAAAS) has biased composition (low complexity). Residues 90–119 (PAAPTQAVDEAEAPSPGASATPAPAAASQE) form a disordered region. Lysine 157 carries the post-translational modification N6-lipoyllysine. Positions 201-220 (APAAAAAASPAPAPLAPAAA) are disordered. A Lipoyl-binding 3 domain is found at 222–296 (PQEVKVPDIG…GTGDQILTLR (75 aa)). At lysine 262 the chain carries N6-lipoyllysine. Positions 301 to 320 (APSGPRARGSPGQAAAAPGA) are enriched in low complexity. Residues 301–336 (APSGPRARGSPGQAAAAPGAAPAPAPVGAPSRNGAK) form a disordered region. In terms of domain architecture, Peripheral subunit-binding (PSBD) spans 338 to 375 (HAGPAVRQLAREFGVELAAINSTGPRGRILKEDVQAYV). Residues 382–638 (AKEAPAAGAA…LLADIRAILL (257 aa)) are catalytic. The active site involves histidine 611.

Belongs to the 2-oxoacid dehydrogenase family. In terms of assembly, forms a 24-polypeptide structural core with octahedral symmetry. The cofactor is (R)-lipoate.

It carries out the reaction N(6)-[(R)-dihydrolipoyl]-L-lysyl-[protein] + acetyl-CoA = N(6)-[(R)-S(8)-acetyldihydrolipoyl]-L-lysyl-[protein] + CoA. The pyruvate dehydrogenase complex catalyzes the overall conversion of pyruvate to acetyl-CoA and CO(2). It contains multiple copies of three enzymatic components: pyruvate dehydrogenase (E1), dihydrolipoamide acetyltransferase (E2) and lipoamide dehydrogenase (E3). This chain is Dihydrolipoyllysine-residue acetyltransferase component of pyruvate dehydrogenase complex, found in Azotobacter vinelandii.